A 613-amino-acid chain; its full sequence is Chaperone protein DnaK (613 aa).

The tract at residues 579-613 (MYQSASSTTQTGSGNQNSSKQENDKTVDAEYKEKS) is disordered. Residues 581 to 597 (QSASSTTQTGSGNQNSS) show a composition bias toward low complexity. Residues 599–613 (QENDKTVDAEYKEKS) show a composition bias toward basic and acidic residues.

It belongs to the heat shock protein 70 family.

Functionally, acts as a chaperone. This chain is Chaperone protein DnaK, found in Thermoplasma volcanium (strain ATCC 51530 / DSM 4299 / JCM 9571 / NBRC 15438 / GSS1).